Reading from the N-terminus, the 147-residue chain is Hemoglobin subunit gamma-1 (147 aa).

Glycine 2 bears the N-acetylglycine mark. The Globin domain occupies 3–147 (HFTEEDKATI…VASALSSRYH (145 aa)). Threonine 13 carries the phosphothreonine modification. Serine 45, serine 51, and serine 53 each carry phosphoserine. An N6-acetyllysine modification is found at lysine 60. Residue histidine 64 coordinates heme b. N6-acetyllysine is present on lysine 83. Heme b is bound at residue histidine 93. Cysteine 94 carries the S-nitrosocysteine modification. Serine 140 is modified (phosphoserine).

Belongs to the globin family. In terms of assembly, heterotetramer of two alpha chains and two gamma chains in fetal hemoglobin (Hb F). In terms of tissue distribution, red blood cells.

Its function is as follows. Gamma chains make up the fetal hemoglobin F, in combination with alpha chains. The sequence is that of Hemoglobin subunit gamma-1 (HBG1) from Pongo pygmaeus (Bornean orangutan).